The primary structure comprises 248 residues: Eukaryotic translation initiation factor 6 (248 aa).

The protein belongs to the eIF-6 family. In terms of assembly, monomer. Associates with the 60S ribosomal subunit.

It localises to the cytoplasm. Its subcellular location is the nucleus. The protein localises to the nucleolus. Functionally, binds to the 60S ribosomal subunit and prevents its association with the 40S ribosomal subunit to form the 80S initiation complex in the cytoplasm. May also be involved in ribosome biogenesis. The chain is Eukaryotic translation initiation factor 6 from Trypanosoma cruzi (strain CL Brener).